A 243-amino-acid polypeptide reads, in one-letter code: MLPFWIALQFLGSLPIRLPGMPRPAELGRSLLFYPLVGVVFGTLLLGFNALLSGAPLLLHAALLLSAWVLLSGGLHLDGLADSADAWLGGFGDRERTLNIMKDPRSGPIAVVTLVVVLLLKFAAIVALIESHNSIGLLLAPLIGRSAMLALFLGTPYVRSGGLGQALADHLPRSLGRKVLLVSTVACVVLAGWSGIAALLVCAVCFYWLRHMMMRRLGGSTGDTAGALLELLELAVVLTLALL.

The next 5 helical transmembrane spans lie at 31-51, 55-75, 109-129, 135-155, and 188-208; these read LLFY…FNAL, APLL…SGGL, IAVV…VALI, IGLL…FLGT, and VVLA…CFYW.

Belongs to the CobS family. The cofactor is Mg(2+).

Its subcellular location is the cell inner membrane. The enzyme catalyses alpha-ribazole + adenosylcob(III)inamide-GDP = adenosylcob(III)alamin + GMP + H(+). It carries out the reaction alpha-ribazole 5'-phosphate + adenosylcob(III)inamide-GDP = adenosylcob(III)alamin 5'-phosphate + GMP + H(+). It functions in the pathway cofactor biosynthesis; adenosylcobalamin biosynthesis; adenosylcobalamin from cob(II)yrinate a,c-diamide: step 7/7. Joins adenosylcobinamide-GDP and alpha-ribazole to generate adenosylcobalamin (Ado-cobalamin). Also synthesizes adenosylcobalamin 5'-phosphate from adenosylcobinamide-GDP and alpha-ribazole 5'-phosphate. This chain is Adenosylcobinamide-GDP ribazoletransferase, found in Pseudomonas syringae pv. tomato (strain ATCC BAA-871 / DC3000).